The chain runs to 205 residues: Probable GTP-binding protein EngB (205 aa).

Positions 27-201 (QGMEVAFAGR…QNKLNAWFSG (175 aa)) constitute an EngB-type G domain. GTP is bound by residues 35–42 (GRSNAGKS), 62–66 (GRTQL), 80–83 (DLPG), 147–150 (TKVD), and 180–182 (FSS). Serine 42 and threonine 64 together coordinate Mg(2+).

This sequence belongs to the TRAFAC class TrmE-Era-EngA-EngB-Septin-like GTPase superfamily. EngB GTPase family. Mg(2+) serves as cofactor.

Its function is as follows. Necessary for normal cell division and for the maintenance of normal septation. The chain is Probable GTP-binding protein EngB from Hamiltonella defensa subsp. Acyrthosiphon pisum (strain 5AT).